Consider the following 1155-residue polypeptide: DNA-directed RNA polymerase subunit beta (1155 aa).

It belongs to the RNA polymerase beta chain family. As to quaternary structure, the RNAP catalytic core consists of 2 alpha, 1 beta, 1 beta' and 1 omega subunit. When a sigma factor is associated with the core the holoenzyme is formed, which can initiate transcription.

The catalysed reaction is RNA(n) + a ribonucleoside 5'-triphosphate = RNA(n+1) + diphosphate. In terms of biological role, DNA-dependent RNA polymerase catalyzes the transcription of DNA into RNA using the four ribonucleoside triphosphates as substrates. This Thermobifida fusca (strain YX) protein is DNA-directed RNA polymerase subunit beta.